The chain runs to 162 residues: Large ribosomal subunit protein uL10 (162 aa).

The protein belongs to the universal ribosomal protein uL10 family. In terms of assembly, part of the ribosomal stalk of the 50S ribosomal subunit. The N-terminus interacts with L11 and the large rRNA to form the base of the stalk. The C-terminus forms an elongated spine to which L12 dimers bind in a sequential fashion forming a multimeric L10(L12)X complex.

Its function is as follows. Forms part of the ribosomal stalk, playing a central role in the interaction of the ribosome with GTP-bound translation factors. This is Large ribosomal subunit protein uL10 from Aliarcobacter butzleri (strain RM4018) (Arcobacter butzleri).